Consider the following 132-residue polypeptide: UPF0299 membrane protein YohJ (132 aa).

Helical transmembrane passes span 7 to 27, 31 to 51, 63 to 83, and 93 to 113; these read IIWQ…AGIF, LLPI…VLLA, GCYV…VGVM, and FGPV…VVSW.

The protein belongs to the UPF0299 family.

The protein localises to the cell inner membrane. The protein is UPF0299 membrane protein YohJ of Salmonella arizonae (strain ATCC BAA-731 / CDC346-86 / RSK2980).